A 369-amino-acid polypeptide reads, in one-letter code: MKDGYKIIGFISSGTYGKVYKAVSSNSNDKRLFAIKKFKAESKQVSSNAQQTGVSQSAIREMMLCREIQHENIVSLVQVLLKDGTISMVFEYAEHDLLQIIHFHSRSRTRQIPPSILKSILWQIINGVAYLHENWIMHRDLKPANIMITATGKVKIGDLGLGRLIRDPILPFYSSDRVVVTIWYRAPELLLGAHDYTPAIDVWAIGCIYGEMLALSPLFKGDEIKMEDKKVVPFQSTQMLRIMELLGTPTEERWPGLKNYPEYYQLSSFEVRYWNNLLPQWYQTVKNRDPQGLDLLMKMLQYDPKSRITAKQALEHVFFTSDKLWTTSPFLNQPIHYPERRISEDDSEVSSKRVLSTSLRSESKRFKGN.

In terms of domain architecture, Protein kinase spans 5 to 319; that stretch reads YKIIGFISSG…AKQALEHVFF (315 aa). Residues 11–19 and Lys-36 contribute to the ATP site; that span reads ISSGTYGKV. Asp-140 acts as the Proton acceptor in catalysis.

The protein belongs to the protein kinase superfamily. CMGC Ser/Thr protein kinase family. CDC2/CDKX subfamily. In terms of assembly, component of the Cdk8 module of the Mediator complex. The Cdk8 module is composed of srb8, srb9, srb10 and srb11. Interacts with med17 and med18.

The protein localises to the nucleus. The enzyme catalyses L-seryl-[protein] + ATP = O-phospho-L-seryl-[protein] + ADP + H(+). The catalysed reaction is L-threonyl-[protein] + ATP = O-phospho-L-threonyl-[protein] + ADP + H(+). It carries out the reaction [DNA-directed RNA polymerase] + ATP = phospho-[DNA-directed RNA polymerase] + ADP + H(+). In terms of biological role, catalytic component of the Cdk8 module/Srb8-11 module which is a regulatory module of the Mediator complex that regulates basal RNA polymerase II transcription. The Cdk8 module may sterically hinder the interaction between Mediator and RNA polymerase II leading to transcriptional repression of a subset of genes regulated by Mediator. The chain is Serine/threonine-protein kinase srb10 (srb10) from Schizosaccharomyces pombe (strain 972 / ATCC 24843) (Fission yeast).